The following is a 734-amino-acid chain: Paralemmin-3 (734 aa).

A coiled-coil region spans residues 19–64 (SALYRQRLEVIAEKRRLQEEIGAARRELEEEKLRVERLKRKSLRER). Disordered stretches follow at residues 62–100 (RERWLMDGAAEGPERPEEPASKDPQSPEGQAQARIRNLE) and 114–217 (QSAS…LGVS). The segment covering 73 to 82 (GPERPEEPAS) has biased composition (basic and acidic residues). Positions 90–116 (GQAQARIRNLEDSLFSLQSQLQLLQSA) form a coiled coil. A phosphoserine mark is found at Ser-139, Ser-158, Ser-167, Ser-170, and Ser-172. Over residues 186–198 (RPSTEAIGTSSEA) the composition is skewed to polar residues. Ser-270 carries the phosphoserine modification. Basic and acidic residues predominate over residues 297 to 308 (DVTGESGRDAEA). 3 disordered regions span residues 297–347 (DVTG…PGVE), 374–400 (PQGAGSAGEPEALIGAQPRGGEASWEV), and 413–709 (EKGR…YAPA). The residue at position 311 (Thr-311) is a Phosphothreonine. Residues 315 to 336 (RLQEQFEAETCRKEEGASRDSL) are compositionally biased toward basic and acidic residues. Phosphoserine is present on residues Ser-332 and Ser-335. Basic and acidic residues-rich tracts occupy residues 413–427 (EKGRAEKLGAEREDG), 435–452 (TQGREENEAEKVERKDSE), 462–484 (DEEKWEVKTTEGEESLEVEKGGE), 494–531 (LVTEKKPEGSLETERKGSEMPLDQEKDGEGSLDRESKT), 540–561 (IGDKSSLDETKGSKKLLDEKTG), 571–582 (EGSKKLLDREAD), 589–607 (EVDKTSGAKDDVSPEEQGK), and 630–647 (DEPRSEEQGQQEPEKQEG). Position 451 is a phosphoserine (Ser-451). At Ser-601 the chain carries Phosphoserine. Phosphoserine is present on Ser-721. Residues Cys-728 and Cys-730 are each lipidated (S-palmitoyl cysteine). The residue at position 731 (Cys-731) is a Cysteine methyl ester. Cys-731 is lipidated: S-farnesyl cysteine. The propeptide at 732–734 (VVM) is removed in mature form.

It belongs to the paralemmin family. As to quaternary structure, interacts with SIGIRR. Palmitoylated on Cys-728 and Cys-730 and prenylated on Cys-731; which is required for membrane association.

It is found in the cytoplasm. It localises to the cell membrane. ATP-binding protein, which may act as a adapter in the Toll-like receptor (TLR) signaling. This is Paralemmin-3 (Palm3) from Mus musculus (Mouse).